The sequence spans 252 residues: MEVVGLLCVAVAVLTWGFLRVWNSAERMRSPEQAGLPGAGSRALVVIAHPDDEAMFFAPTILGLARLKQQVSLLCFSSGNYYNQGEIRKKELLQSCAVLGIPPSRVMIIDKREFPDDPEVQWDTEHVASTILQHIHANATDLVVTFDAEGVSGHSNHIALYKAVRALHSGGKLPEGCSVLTLQSVNVLRKYVFLLDLPWTLLSPQGVLFVLTSKEVAQAKKAMSCHRSQLLWFRHLYTVFSRYMSVNSLQLL.

A helical transmembrane segment spans residues 2 to 22; it reads EVVGLLCVAVAVLTWGFLRVW. At 23–252 the chain is on the cytoplasmic side; it reads NSAERMRSPE…YMSVNSLQLL (230 aa).

It belongs to the PIGL family.

The protein localises to the endoplasmic reticulum membrane. The enzyme catalyses a 6-(N-acetyl-alpha-D-glucosaminyl)-1-(1,2-diacyl-sn-glycero-3-phospho)-1D-myo-inositol + H2O = a 6-(alpha-D-glucosaminyl)-1-(1,2-diacyl-sn-glycero-3-phospho)-1D-myo-inositol + acetate. It participates in glycolipid biosynthesis; glycosylphosphatidylinositol-anchor biosynthesis. In terms of biological role, catalyzes the second step of glycosylphosphatidylinositol (GPI) biosynthesis, which is the de-N-acetylation of N-acetylglucosaminyl-phosphatidylinositol. The polypeptide is N-acetylglucosaminyl-phosphatidylinositol de-N-acetylase (Pigl) (Rattus norvegicus (Rat)).